We begin with the raw amino-acid sequence, 154 residues long: SsrA-binding protein (154 aa).

A disordered region spans residues 135–154 (KREDLKRRQDQRDMARAMKR).

It belongs to the SmpB family.

It localises to the cytoplasm. Required for rescue of stalled ribosomes mediated by trans-translation. Binds to transfer-messenger RNA (tmRNA), required for stable association of tmRNA with ribosomes. tmRNA and SmpB together mimic tRNA shape, replacing the anticodon stem-loop with SmpB. tmRNA is encoded by the ssrA gene; the 2 termini fold to resemble tRNA(Ala) and it encodes a 'tag peptide', a short internal open reading frame. During trans-translation Ala-aminoacylated tmRNA acts like a tRNA, entering the A-site of stalled ribosomes, displacing the stalled mRNA. The ribosome then switches to translate the ORF on the tmRNA; the nascent peptide is terminated with the 'tag peptide' encoded by the tmRNA and targeted for degradation. The ribosome is freed to recommence translation, which seems to be the essential function of trans-translation. This Microcystis aeruginosa (strain NIES-843 / IAM M-2473) protein is SsrA-binding protein.